Consider the following 196-residue polypeptide: Imidazole glycerol phosphate synthase subunit HisH (196 aa).

One can recognise a Glutamine amidotransferase type-1 domain in the interval 2–196 (NVVIVDTECA…LKRFLELTLC (195 aa)). Residue cysteine 77 is the Nucleophile of the active site. Catalysis depends on residues histidine 175 and glutamate 177.

Heterodimer of HisH and HisF.

Its subcellular location is the cytoplasm. The catalysed reaction is 5-[(5-phospho-1-deoxy-D-ribulos-1-ylimino)methylamino]-1-(5-phospho-beta-D-ribosyl)imidazole-4-carboxamide + L-glutamine = D-erythro-1-(imidazol-4-yl)glycerol 3-phosphate + 5-amino-1-(5-phospho-beta-D-ribosyl)imidazole-4-carboxamide + L-glutamate + H(+). It catalyses the reaction L-glutamine + H2O = L-glutamate + NH4(+). It functions in the pathway amino-acid biosynthesis; L-histidine biosynthesis; L-histidine from 5-phospho-alpha-D-ribose 1-diphosphate: step 5/9. In terms of biological role, IGPS catalyzes the conversion of PRFAR and glutamine to IGP, AICAR and glutamate. The HisH subunit catalyzes the hydrolysis of glutamine to glutamate and ammonia as part of the synthesis of IGP and AICAR. The resulting ammonia molecule is channeled to the active site of HisF. The chain is Imidazole glycerol phosphate synthase subunit HisH from Idiomarina loihiensis (strain ATCC BAA-735 / DSM 15497 / L2-TR).